The sequence spans 542 residues: Membrane protein insertase YidC (542 aa).

6 helical membrane-spanning segments follow: residues 6–26, 326–346, 350–370, 421–441, 458–478, and 501–521; these read NILL…WQTD, LVVD…LLMF, FVGN…GGLY, GGCL…WVLL, LSVQ…MFLM, and VIFT…WLVG.

Belongs to the OXA1/ALB3/YidC family. Type 1 subfamily. Interacts with the Sec translocase complex via SecD. Specifically interacts with transmembrane segments of nascent integral membrane proteins during membrane integration.

The protein resides in the cell inner membrane. Required for the insertion and/or proper folding and/or complex formation of integral membrane proteins into the membrane. Involved in integration of membrane proteins that insert both dependently and independently of the Sec translocase complex, as well as at least some lipoproteins. Aids folding of multispanning membrane proteins. The chain is Membrane protein insertase YidC from Shewanella frigidimarina (strain NCIMB 400).